A 307-amino-acid chain; its full sequence is MPIKIPDTLPAFETLVNEGVRVMTETAAVRQDIRPLQIGLLNLMPNKIKTEIQIARLIGATPLQVELTLVRIGGYRPKNTPEEHLFAFYETWEEVKGRKFDGFIITGAPVETLDYEEVTYWDELKSIFEWTETHVHSTLNVCWGAMAAIYHFHGVPKYPLKEKAFGVYRHQNLKPSSVYLNGFSDDFAVPVSRWTEVRRADIDRVPSLEILMESKEMGVCLVHEKKGNRLYMFNHVEYDSTSLSDEYFRDVDAGVPIKLPHDYFPHNDADLPPQNRWRSHAHLFFGNWINEMYQTTPYELEKIGTGD.

Cys-142 acts as the Acyl-thioester intermediate in catalysis. 2 residues coordinate substrate: Lys-163 and Ser-192. Residue His-235 is the Proton acceptor of the active site. Glu-237 is a catalytic residue. Arg-249 serves as a coordination point for substrate.

This sequence belongs to the MetA family.

The protein resides in the cytoplasm. The enzyme catalyses L-homoserine + acetyl-CoA = O-acetyl-L-homoserine + CoA. The protein operates within amino-acid biosynthesis; L-methionine biosynthesis via de novo pathway; O-acetyl-L-homoserine from L-homoserine: step 1/1. Functionally, transfers an acetyl group from acetyl-CoA to L-homoserine, forming acetyl-L-homoserine. The sequence is that of Homoserine O-acetyltransferase from Sinorhizobium fredii (strain NBRC 101917 / NGR234).